Consider the following 607-residue polypeptide: Elongation factor 4 (607 aa).

The region spanning 11 to 193 is the tr-type G domain; the sequence is EKIRNFSIIA…QIVEKVPAPQ (183 aa). Residues 23–28 and 140–143 each bind GTP; these read DHGKST and NKID.

This sequence belongs to the TRAFAC class translation factor GTPase superfamily. Classic translation factor GTPase family. LepA subfamily.

The protein resides in the cell membrane. It carries out the reaction GTP + H2O = GDP + phosphate + H(+). Its function is as follows. Required for accurate and efficient protein synthesis under certain stress conditions. May act as a fidelity factor of the translation reaction, by catalyzing a one-codon backward translocation of tRNAs on improperly translocated ribosomes. Back-translocation proceeds from a post-translocation (POST) complex to a pre-translocation (PRE) complex, thus giving elongation factor G a second chance to translocate the tRNAs correctly. Binds to ribosomes in a GTP-dependent manner. The chain is Elongation factor 4 from Lactococcus lactis subsp. cremoris (strain SK11).